The primary structure comprises 180 residues: Probable chorismate pyruvate-lyase (180 aa).

Residues Arg-82, Leu-120, and Glu-165 each coordinate substrate.

This sequence belongs to the UbiC family.

It localises to the cytoplasm. It carries out the reaction chorismate = 4-hydroxybenzoate + pyruvate. Its pathway is cofactor biosynthesis; ubiquinone biosynthesis. Its function is as follows. Removes the pyruvyl group from chorismate, with concomitant aromatization of the ring, to provide 4-hydroxybenzoate (4HB) for the ubiquinone pathway. This chain is Probable chorismate pyruvate-lyase, found in Photobacterium profundum (strain SS9).